Reading from the N-terminus, the 586-residue chain is Frizzled-10-A (586 aa).

Positions 1-26 (MDVSGVTGLLRGTALLLVLAAALCSA) are cleaved as a signal peptide. The Extracellular portion of the chain corresponds to 27–230 (ISSINPDRSG…DVYWSKDDKK (204 aa)). Residues 35–156 (SGDGRCQAIE…NDPNYLCMEA (122 aa)) enclose the FZ domain. Disulfide bonds link cysteine 40-cysteine 101, cysteine 48-cysteine 94, cysteine 85-cysteine 123, cysteine 112-cysteine 153, and cysteine 116-cysteine 140. Asparagine 54 is a glycosylation site (N-linked (GlcNAc...) asparagine). Asparagine 159 carries N-linked (GlcNAc...) asparagine glycosylation. Residues 161 to 199 (TDETPRGSSMLPPIFRPQRPSSGHEIYPKDPTSRSSCEN) form a disordered region. The helical transmembrane segment at 231–251 (FAFIWIAIWSILCFFSSAFTV) threads the bilayer. Over 252–267 (LTFLVDPLRFKYPERP) the chain is Cytoplasmic. Residues 268-288 (IIFLSMCYCVYSVGYIIRLFA) form a helical membrane-spanning segment. At 289 to 315 (GADSIACDRDSGQLYVIQEGLESTGCT) the chain is on the extracellular side. A helical transmembrane segment spans residues 316 to 336 (IVFLILYYFGMASSLWWVILT). At 337-356 (LTWFLAAGKKWGHEAIEANS) the chain is on the cytoplasmic side. The chain crosses the membrane as a helical span at residues 357–377 (SYFHLAAWAIPAVKTIMILVM). The Extracellular portion of the chain corresponds to 378–401 (RRVAGDELTGVCYVGSMDVNALTG). A helical transmembrane segment spans residues 402–422 (FVLIPLACYLIIGTSFILSGF). Over 423 to 448 (VALFHIRRVMKTGGENTDKLEKLMVR) the chain is Cytoplasmic. A helical membrane pass occupies residues 449-469 (IGVFSVLYTVPATCVIACYFY). The Extracellular portion of the chain corresponds to 470–507 (ERLNMDFWKILATQDKCKMDSQTKTLDCTMTSSIPAVE). A helical membrane pass occupies residues 508–528 (IFMVKIFMLLVVGITSGMWIW). At 529 to 586 (TSKTVQSWQNVFSKRLKKRNRSKPASVITSAGIYKKPQHPPKVHHGKYESALQSPTCV) the chain is on the cytoplasmic side. The short motif at 531-536 (KTVQSW) is the Lys-Thr-X-X-X-Trp motif, mediates interaction with the PDZ domain of Dvl family members element. The disordered stretch occupies residues 563–586 (KKPQHPPKVHHGKYESALQSPTCV). Residues 564–573 (KPQHPPKVHH) are compositionally biased toward basic residues. The short motif at 584 to 586 (TCV) is the PDZ-binding element.

It belongs to the G-protein coupled receptor Fz/Smo family. Expressed in liver, lung, brain, testis, stomach, kidney, eye, skeletal muscle and skin.

It is found in the cell membrane. In terms of biological role, receptor for Wnt proteins. Most of frizzled receptors are coupled to the beta-catenin canonical signaling pathway, which leads to the activation of disheveled proteins, inhibition of GSK-3 kinase, nuclear accumulation of beta-catenin and activation of Wnt target genes. A second signaling pathway involving PKC and calcium fluxes has been seen for some family members, but it is not yet clear if it represents a distinct pathway or if it can be integrated in the canonical pathway, as PKC seems to be required for Wnt-mediated inactivation of GSK-3 kinase. Both pathways seem to involve interactions with G-proteins. May be involved in transduction and intercellular transmission of polarity information during tissue morphogenesis and/or in differentiated tissues. Activated by Wnt8. Could have an antagonizing activity in the morphogenesis during development. This chain is Frizzled-10-A (fzd10-a), found in Xenopus laevis (African clawed frog).